We begin with the raw amino-acid sequence, 509 residues long: 2,3-bisphosphoglycerate-independent phosphoglycerate mutase (509 aa).

Residues Asp-12 and Ser-62 each coordinate Mn(2+). Residue Ser-62 is the Phosphoserine intermediate of the active site. Substrate-binding positions include His-123, 153 to 154, Arg-185, Arg-191, 260 to 263, and Lys-333; these read RD and RPDR. Asp-400, His-404, Asp-441, His-442, and His-460 together coordinate Mn(2+).

This sequence belongs to the BPG-independent phosphoglycerate mutase family. Monomer. Requires Mn(2+) as cofactor.

The catalysed reaction is (2R)-2-phosphoglycerate = (2R)-3-phosphoglycerate. It participates in carbohydrate degradation; glycolysis; pyruvate from D-glyceraldehyde 3-phosphate: step 3/5. Catalyzes the interconversion of 2-phosphoglycerate and 3-phosphoglycerate. This chain is 2,3-bisphosphoglycerate-independent phosphoglycerate mutase, found in Clostridium kluyveri (strain ATCC 8527 / DSM 555 / NBRC 12016 / NCIMB 10680 / K1).